We begin with the raw amino-acid sequence, 771 residues long: Semaphorin-3A (771 aa).

An N-terminal signal peptide occupies residues 1–20 (MGWLTRIVCLFWGVLLTARA). The Sema domain occupies 31-514 (RLKLSYKEML…STAGVAQLPL (484 aa)). Asparagine 53 carries N-linked (GlcNAc...) asparagine glycosylation. A disulfide bridge connects residues cysteine 103 and cysteine 114. A glycan (N-linked (GlcNAc...) asparagine) is linked at asparagine 125. 4 cysteine pairs are disulfide-bonded: cysteine 132–cysteine 141, cysteine 269–cysteine 381, cysteine 293–cysteine 341, and cysteine 517–cysteine 535. The 85-residue stretch at 580-664 (PEERIIYGVE…GFIQTLLKVT (85 aa)) folds into the Ig-like C2-type domain. Asparagine 590 carries an N-linked (GlcNAc...) asparagine glycan. Cysteine 649 and cysteine 722 form a disulfide bridge. Basic residues predominate over residues 728–737 (RDRKQRRQRP). The disordered stretch occupies residues 728–771 (RDRKQRRQRPGHTPGNSNKWKHLQENKKGRNRRTHEFERAPRSV). Residues 749–771 (HLQENKKGRNRRTHEFERAPRSV) show a composition bias toward basic and acidic residues.

Belongs to the semaphorin family. Interacts with PLXND1. Expressed in the dorsal root ganglia.

It is found in the secreted. Functionally, involved in the development of the olfactory system and in neuronal control of puberty. Induces the collapse and paralysis of neuronal growth cones. Could serve as a ligand that guides specific growth cones by a motility-inhibiting mechanism. Binds to the complex neuropilin-1/plexin-1. The chain is Semaphorin-3A (SEMA3A) from Homo sapiens (Human).